The primary structure comprises 37 residues: Cytochrome b6-f complex subunit 5 (37 aa).

The chain crosses the membrane as a helical span at residues 5–25 (LLSGIVLGLIVVTLAGLFYAA).

This sequence belongs to the PetG family. The 4 large subunits of the cytochrome b6-f complex are cytochrome b6, subunit IV (17 kDa polypeptide, PetD), cytochrome f and the Rieske protein, while the 4 small subunits are PetG, PetL, PetM and PetN. The complex functions as a dimer.

It is found in the cellular thylakoid membrane. In terms of biological role, component of the cytochrome b6-f complex, which mediates electron transfer between photosystem II (PSII) and photosystem I (PSI), cyclic electron flow around PSI, and state transitions. PetG is required for either the stability or assembly of the cytochrome b6-f complex. This Anabaena variabilis protein is Cytochrome b6-f complex subunit 5.